A 545-amino-acid polypeptide reads, in one-letter code: Threonine--tRNA ligase catalytic subunit (545 aa).

Residues 139–433 are catalytic; that stretch reads DHRLIGEKLD…LLEHFKGKLP (295 aa). Cys-231, His-282, and His-410 together coordinate Zn(2+).

This sequence belongs to the class-II aminoacyl-tRNA synthetase family. Homodimer. Probably interacts with its editing subunit. Zn(2+) is required as a cofactor.

The protein resides in the cytoplasm. It carries out the reaction tRNA(Thr) + L-threonine + ATP = L-threonyl-tRNA(Thr) + AMP + diphosphate + H(+). Its function is as follows. Catalyzes the attachment of threonine to tRNA(Thr) in a two-step reaction: L-threonine is first activated by ATP to form Thr-AMP and then transferred to the acceptor end of tRNA(Thr). Also activates L-serine and transfers it to tRNA(Thr) but cannot deacylate incorrectly charged amino acid; unlike most archaea the editing function is found in a freestanding protein. In Saccharolobus islandicus (strain L.S.2.15 / Lassen #1) (Sulfolobus islandicus), this protein is Threonine--tRNA ligase catalytic subunit.